Reading from the N-terminus, the 163-residue chain is Allophycocyanin alpha-B chain (163 aa).

N71 is modified (N4-methylasparagine). C81 provides a ligand contact to (2R,3E)-phycocyanobilin.

This sequence belongs to the phycobiliprotein family. Heterodimer of an alpha and a beta chain. Post-translationally, contains one covalently linked bilin chromophore.

The protein resides in the cellular thylakoid membrane. Light-harvesting photosynthetic bile pigment-protein from the phycobiliprotein complex. Allophycocyanin has a maximum absorption at approximately 650 nanometers. The polypeptide is Allophycocyanin alpha-B chain (Synechococcus sp. (strain ATCC 27144 / PCC 6301 / SAUG 1402/1) (Anacystis nidulans)).